The chain runs to 578 residues: Proline--tRNA ligase (578 aa).

Belongs to the class-II aminoacyl-tRNA synthetase family. ProS type 1 subfamily. In terms of assembly, homodimer.

It localises to the cytoplasm. It carries out the reaction tRNA(Pro) + L-proline + ATP = L-prolyl-tRNA(Pro) + AMP + diphosphate. Catalyzes the attachment of proline to tRNA(Pro) in a two-step reaction: proline is first activated by ATP to form Pro-AMP and then transferred to the acceptor end of tRNA(Pro). As ProRS can inadvertently accommodate and process non-cognate amino acids such as alanine and cysteine, to avoid such errors it has two additional distinct editing activities against alanine. One activity is designated as 'pretransfer' editing and involves the tRNA(Pro)-independent hydrolysis of activated Ala-AMP. The other activity is designated 'posttransfer' editing and involves deacylation of mischarged Ala-tRNA(Pro). The misacylated Cys-tRNA(Pro) is not edited by ProRS. The polypeptide is Proline--tRNA ligase (Burkholderia thailandensis (strain ATCC 700388 / DSM 13276 / CCUG 48851 / CIP 106301 / E264)).